Reading from the N-terminus, the 1295-residue chain is DNA-directed RNA polymerase subunit beta' (1295 aa).

The Zn(2+) site is built by C60, C62, C75, and C78. D516, D518, and D520 together coordinate Mg(2+). C841, C914, C921, and C924 together coordinate Zn(2+).

It belongs to the RNA polymerase beta' chain family. The RNAP catalytic core consists of 2 alpha, 1 beta, 1 beta' and 1 omega subunit. When a sigma factor is associated with the core the holoenzyme is formed, which can initiate transcription. Mg(2+) serves as cofactor. Zn(2+) is required as a cofactor.

It catalyses the reaction RNA(n) + a ribonucleoside 5'-triphosphate = RNA(n+1) + diphosphate. Functionally, DNA-dependent RNA polymerase catalyzes the transcription of DNA into RNA using the four ribonucleoside triphosphates as substrates. The protein is DNA-directed RNA polymerase subunit beta' of Dehalococcoides mccartyi (strain CBDB1).